A 296-amino-acid chain; its full sequence is Small ribosomal subunit protein uS2 (296 aa).

Disordered stretches follow at residues M1–Q24 and H270–Q296.

This sequence belongs to the universal ribosomal protein uS2 family.

This chain is Small ribosomal subunit protein uS2, found in Mycoplasmopsis synoviae (strain 53) (Mycoplasma synoviae).